The sequence spans 394 residues: Na(+)/H(+) antiporter NhaA (394 aa).

The next 11 membrane-spanning stretches (helical) occupy residues 14-34, 59-79, 95-115, 125-145, 154-174, 179-199, 213-233, 254-274, 292-312, 328-348, and 363-383; these read AGGLILIIAAAIALLMANSAL, LLLWINDGLMAVFFLMIGLEV, VFPAIAALGGMLAPALIYLLF, GWAIPAATDIAFALGVMALLG, VFLLALAIIDDLGVIIIIALF, VSLQSLGIAAAAIALLAYMNW, LVLWVCILKSGVHATLAGVIV, GLHPWVAYLILPLFAFANAGV, IATGLFIGKPLGIFTFSWLAV, IFAVSVLCGIGFTMSIFIASL, and LGILLGSTTAAVVGYSLLRLV.

This sequence belongs to the NhaA Na(+)/H(+) (TC 2.A.33) antiporter family.

It localises to the cell inner membrane. The catalysed reaction is Na(+)(in) + 2 H(+)(out) = Na(+)(out) + 2 H(+)(in). Na(+)/H(+) antiporter that extrudes sodium in exchange for external protons. This is Na(+)/H(+) antiporter NhaA from Yersinia pestis bv. Antiqua (strain Antiqua).